The primary structure comprises 151 residues: Ribosome maturation factor RimP (151 aa).

This sequence belongs to the RimP family.

The protein localises to the cytoplasm. Required for maturation of 30S ribosomal subunits. The chain is Ribosome maturation factor RimP from Haemophilus influenzae (strain PittEE).